Consider the following 141-residue polypeptide: Hemoglobin subunit alpha (141 aa).

Residues 1-141 (VLSPADKTNV…VSTVLTSKYR (141 aa)) enclose the Globin domain. Position 3 is a phosphoserine (Ser3). N6-succinyllysine is present on Lys7. Thr8 carries the phosphothreonine modification. Residue Lys11 is modified to N6-succinyllysine. Lys16 bears the N6-acetyllysine; alternate mark. Position 16 is an N6-succinyllysine; alternate (Lys16). Tyr24 carries the post-translational modification Phosphotyrosine. Lys40 is modified (N6-succinyllysine). Position 58 (His58) interacts with O2. Heme b is bound at residue His87. Phosphoserine is present on Ser102. Position 108 is a phosphothreonine (Thr108). A phosphoserine mark is found at Ser124 and Ser131. 2 positions are modified to phosphothreonine: Thr134 and Thr137. A Phosphoserine modification is found at Ser138.

Belongs to the globin family. Heterotetramer of two alpha chains and two beta chains. As to expression, red blood cells.

Involved in oxygen transport from the lung to the various peripheral tissues. Functionally, hemopressin acts as an antagonist peptide of the cannabinoid receptor CNR1. Hemopressin-binding efficiently blocks cannabinoid receptor CNR1 and subsequent signaling. The sequence is that of Hemoglobin subunit alpha (HBA) from Tursiops truncatus (Atlantic bottle-nosed dolphin).